A 346-amino-acid polypeptide reads, in one-letter code: Phosphoribosylformylglycinamidine cyclo-ligase (346 aa).

This sequence belongs to the AIR synthase family.

The protein resides in the cytoplasm. The enzyme catalyses 2-formamido-N(1)-(5-O-phospho-beta-D-ribosyl)acetamidine + ATP = 5-amino-1-(5-phospho-beta-D-ribosyl)imidazole + ADP + phosphate + H(+). It functions in the pathway purine metabolism; IMP biosynthesis via de novo pathway; 5-amino-1-(5-phospho-D-ribosyl)imidazole from N(2)-formyl-N(1)-(5-phospho-D-ribosyl)glycinamide: step 2/2. This Alteromonas mediterranea (strain DSM 17117 / CIP 110805 / LMG 28347 / Deep ecotype) protein is Phosphoribosylformylglycinamidine cyclo-ligase.